We begin with the raw amino-acid sequence, 77 residues long: Ubiquitin-like protein NEDD8 (77 aa).

The tract at residues 70–72 (VLA) is interaction with uba-3. Residue Gly-76 forms a Glycyl lysine isopeptide (Gly-Lys) (interchain with K-? in acceptor proteins) linkage. Phe-77 is a propeptide.

The protein belongs to the ubiquitin family. Interacts with dcn-1. Covalently attached to cullins. May interact with atx-3. Cleavage of precursor form is necessary for function.

It localises to the nucleus. Its subcellular location is the cytoplasm. Functionally, ubiquitin-like protein which plays an important role in cell cycle control and embryogenesis. Covalent attachment to its substrates requires prior activation by the E1 complex uba-3-ula-1 and linkage to the E2 enzyme ubc-12. Attachment of ned-8 to cullins activates their associated E3 ubiquitin ligase activity, and thus promotes polyubiquitination and proteasomal degradation of cyclins and other regulatory proteins. In Caenorhabditis elegans, this protein is Ubiquitin-like protein NEDD8 (ned-8).